A 259-amino-acid polypeptide reads, in one-letter code: Ribosome maturation factor RimP (259 aa).

Residues 198 to 259 (SLGLAPEPPP…RGEIDTSEGD (62 aa)) form a disordered region. A compositionally biased stretch (basic and acidic residues) spans 243–253 (LAADKARRGEI).

Belongs to the RimP family.

Its subcellular location is the cytoplasm. Functionally, required for maturation of 30S ribosomal subunits. The sequence is that of Ribosome maturation factor RimP from Rhodopseudomonas palustris (strain TIE-1).